Reading from the N-terminus, the 155-residue chain is Aspartate carbamoyltransferase regulatory chain (155 aa).

Zn(2+) is bound by residues Cys-112, Cys-117, Cys-140, and Cys-143.

Belongs to the PyrI family. Contains catalytic and regulatory chains. It depends on Zn(2+) as a cofactor.

Its function is as follows. Involved in allosteric regulation of aspartate carbamoyltransferase. This is Aspartate carbamoyltransferase regulatory chain from Phocaeicola vulgatus (strain ATCC 8482 / DSM 1447 / JCM 5826 / CCUG 4940 / NBRC 14291 / NCTC 11154) (Bacteroides vulgatus).